The primary structure comprises 399 residues: S-adenosylmethionine synthase (399 aa).

ATP is bound at residue H17. Position 19 (D19) interacts with Mg(2+). E45 provides a ligand contact to K(+). L-methionine-binding residues include E58 and Q101. The segment at 101 to 111 (QSADIAMGVDQ) is flexible loop. ATP is bound by residues 177–179 (DGK), 244–245 (RF), D253, 259–260 (RK), A276, and K280. D253 is an L-methionine binding site. Residue K284 participates in L-methionine binding.

The protein belongs to the AdoMet synthase family. In terms of assembly, homotetramer; dimer of dimers. It depends on Mg(2+) as a cofactor. Requires K(+) as cofactor.

The protein resides in the cytoplasm. The catalysed reaction is L-methionine + ATP + H2O = S-adenosyl-L-methionine + phosphate + diphosphate. It participates in amino-acid biosynthesis; S-adenosyl-L-methionine biosynthesis; S-adenosyl-L-methionine from L-methionine: step 1/1. Its function is as follows. Catalyzes the formation of S-adenosylmethionine (AdoMet) from methionine and ATP. The overall synthetic reaction is composed of two sequential steps, AdoMet formation and the subsequent tripolyphosphate hydrolysis which occurs prior to release of AdoMet from the enzyme. This Bacillus anthracis (strain A0248) protein is S-adenosylmethionine synthase.